Here is an 816-residue protein sequence, read N- to C-terminus: Fibroblast growth factor receptor (816 aa).

The N-terminal stretch at Met1–Gly19 is a signal peptide. Residues Leu20 to Val370 are Extracellular-facing. 9 N-linked (GlcNAc...) asparagine glycosylation sites follow: Asn21, Asn69, Asn119, Asn156, Asn171, Asn244, Asn274, Asn313, and Asn321. One can recognise an Ig-like C2-type 1 domain in the interval Pro25–Gln105. Cys43 and Cys94 are disulfide-bonded. Positions Leu126 to Glu217 constitute an Ig-like C2-type 2 domain. Cysteines 147 and 201 form a disulfide. Residues Ile371–Phe391 traverse the membrane as a helical segment. Residues Ile392 to Ser816 are Cytoplasmic-facing. A Protein kinase domain is found at Leu474–Leu747. ATP is bound by residues Leu480–Val488 and Lys508. The active-site Proton acceptor is the Asp612. Tyr643 carries the post-translational modification Phosphotyrosine; by autocatalysis.

It belongs to the protein kinase superfamily. Tyr protein kinase family. Fibroblast growth factor receptor subfamily.

It is found in the membrane. It carries out the reaction L-tyrosyl-[protein] + ATP = O-phospho-L-tyrosyl-[protein] + ADP + H(+). Receptor for basic fibroblast growth factor. This is Fibroblast growth factor receptor (FGFR) from Hydra vulgaris (Hydra).